A 239-amino-acid polypeptide reads, in one-letter code: ATP-dependent dethiobiotin synthetase BioD (239 aa).

An ATP-binding site is contributed by 15–20; it reads EIGKTF. Thr-19 is a Mg(2+) binding site. Lys-40 is a catalytic residue. Residues Asp-57, 118–121, and 178–179 each bind ATP; these read EGVG and NH. Positions 57 and 118 each coordinate Mg(2+).

The protein belongs to the dethiobiotin synthetase family. As to quaternary structure, homodimer. Requires Mg(2+) as cofactor.

The protein localises to the cytoplasm. It catalyses the reaction (7R,8S)-7,8-diammoniononanoate + CO2 + ATP = (4R,5S)-dethiobiotin + ADP + phosphate + 3 H(+). Its pathway is cofactor biosynthesis; biotin biosynthesis; biotin from 7,8-diaminononanoate: step 1/2. In terms of biological role, catalyzes a mechanistically unusual reaction, the ATP-dependent insertion of CO2 between the N7 and N8 nitrogen atoms of 7,8-diaminopelargonic acid (DAPA, also called 7,8-diammoniononanoate) to form a ureido ring. The sequence is that of ATP-dependent dethiobiotin synthetase BioD from Burkholderia cenocepacia (strain HI2424).